The primary structure comprises 200 residues: Small ribosomal subunit protein uS4 (200 aa).

The disordered stretch occupies residues 22 to 42 (TGKELEKRPYAPGPHGPNQRK). An S4 RNA-binding domain is found at 92–152 (ARLDNLVYRM…EKSNSLVVVK (61 aa)).

It belongs to the universal ribosomal protein uS4 family. Part of the 30S ribosomal subunit. Contacts protein S5. The interaction surface between S4 and S5 is involved in control of translational fidelity.

In terms of biological role, one of the primary rRNA binding proteins, it binds directly to 16S rRNA where it nucleates assembly of the body of the 30S subunit. Its function is as follows. With S5 and S12 plays an important role in translational accuracy. The chain is Small ribosomal subunit protein uS4 from Bacillus mycoides (strain KBAB4) (Bacillus weihenstephanensis).